Consider the following 44-residue polypeptide: Homeobox protein DLX-1 (44 aa).

The disordered stretch occupies residues 19 to 44 (RALSAGSPPVPPGWNRIPPLGRAQEE).

The protein belongs to the distal-less homeobox family. Interacts with SMAD4 (via homeobox DNA-binding domain). Interacts (via homeobox DNA-binding domain) with POU4F2; this interaction suppresses DLX1-mediated transcriptional activity in postnatal retina and enhances retinal ganglion cell (RGC) differentiation.

It is found in the nucleus. Its function is as follows. Plays a role as a transcriptional activator or repressor. Inhibits several cytokine signaling pathways, such as TGFB1, activin-A/INHBA and BMP4 by interfering with the transcriptional stimulatory activity of transcription factors, such as MSX2, FAST2, SMAD2 and SMAD3 during hematopoietic cell differentiation. Plays a role in terminal differentiation of interneurons, such as amacrine and bipolar cells in the developing retina. Likely to play a regulatory role in the development of the ventral forebrain. May play a role in craniofacial patterning and morphogenesis and may be involved in the early development of diencephalic subdivisions. The protein is Homeobox protein DLX-1 (Dlx1) of Rattus norvegicus (Rat).